Reading from the N-terminus, the 98-residue chain is Small ribosomal subunit protein bS6c (98 aa).

The protein belongs to the bacterial ribosomal protein bS6 family.

The protein localises to the plastid. Its subcellular location is the chloroplast. Functionally, binds together with bS18 to 16S ribosomal RNA. This Phaeodactylum tricornutum (strain CCAP 1055/1) protein is Small ribosomal subunit protein bS6c.